Reading from the N-terminus, the 134-residue chain is uncharacterized protein (134 aa).

A helical membrane pass occupies residues 13–35 (FFIAFSAYLVVILLMTAVSVYYL).

Its subcellular location is the membrane. This is an uncharacterized protein from Archaeoglobus fulgidus (strain ATCC 49558 / DSM 4304 / JCM 9628 / NBRC 100126 / VC-16).